The chain runs to 108 residues: uncharacterized protein (108 aa).

Residues 7 to 106 (CPRFEKAVDI…WATEWIDPSF (100 aa)) form the HTH hxlR-type domain.

This is an uncharacterized protein from Bacillus subtilis (strain 168).